A 382-amino-acid polypeptide reads, in one-letter code: Acetylxylan esterase A (382 aa).

Residues 1-21 (MKSLSFSFLVTLFLYLTLSSA) form the signal peptide. Residues 22 to 31 (RTLGKDVNKR) constitute a propeptide that is removed on maturation. Residues 35–307 (GSLQQVTGFG…GAKDMEWFGF (273 aa)) form a catalytic region. N-linked (GlcNAc...) asparagine glycosylation occurs at Asn-46. The Charge relay system role is filled by Ser-152. The N-linked (GlcNAc...) asparagine glycan is linked to Asn-194. The segment at 308-345 (SGSGSSSTTTASATKTSTTSTTSTKTTSSTSSTTTSST) is ser/Thr-rich linker. Low complexity predominate over residues 313–345 (SSTTTASATKTSTTSTTSTKTTSSTSSTTTSST). Residues 313 to 346 (SSTTTASATKTSTTSTTSTKTTSSTSSTTTSSTG) form a disordered region. The CBM1 domain occupies 346–382 (GVAAHWGQCGGSGWTGPTVCESGYTCTYSNAWYSQCL).

The protein belongs to the carbohydrate esterase 1 (CE1) family. AxeA subfamily. In terms of assembly, monomer. Glycosylated.

It localises to the secreted. The catalysed reaction is Deacetylation of xylans and xylo-oligosaccharides.. The protein operates within glycan degradation; xylan degradation. Inactivated by phenylmethylsulfonylfluorid (PMSF), a specific inhibitor of serine esterases. In terms of biological role, acetylxylan esterase involved in the hydrolysis of xylan, a major structural heterogeneous polysaccharide found in plant biomass representing the second most abundant polysaccharide in the biosphere, after cellulose. Degrades acetylated xylans by cleaving acetyl side groups from the hetero-xylan backbone. The chain is Acetylxylan esterase A (axeA) from Talaromyces purpureogenus (Soft rot fungus).